Consider the following 172-residue polypeptide: Protein-export protein SecB (172 aa).

Belongs to the SecB family. In terms of assembly, homotetramer, a dimer of dimers. One homotetramer interacts with 1 SecA dimer.

It localises to the cytoplasm. Functionally, one of the proteins required for the normal export of preproteins out of the cell cytoplasm. It is a molecular chaperone that binds to a subset of precursor proteins, maintaining them in a translocation-competent state. It also specifically binds to its receptor SecA. The protein is Protein-export protein SecB of Dinoroseobacter shibae (strain DSM 16493 / NCIMB 14021 / DFL 12).